We begin with the raw amino-acid sequence, 469 residues long: Coiled-coil domain-containing protein 6 (469 aa).

Residues 1–10 (MADSASESDT) are compositionally biased toward acidic residues. Residues 1–37 (MADSASESDTDAAGGGPAAMQSSCSATSGGSGGGGGG) are disordered. Ala-2 is subject to N-acetylalanine. Ser-45 is subject to Phosphoserine. A coiled-coil region spans residues 47-320 (FRLEELTNRL…LCRQLSESES (274 aa)). Repeat copies occupy residues 99–127 (EQEEEFISNTLFKKIQALQKEKETLAVNY), 128–156 (EKEEEFLTNELSRKLMQLQHEKAELEQHL), and 157–185 (EQEQEFQVNKLMKKIKKLENDTISKQLTL). The 5 X 29 AA tandem repeats stretch occupies residues 99-228 (EQEEEFISNT…AEKRILQEKL (130 aa)). The stretch at 186 to 199 (EQLRREKIDLENTL) is one 4; approximate repeat. Repeat 5 spans residues 200–228 (EQEQEALVNRLWKRMDKLEAEKRILQEKL). Ser-233, Ser-237, Ser-242, Ser-247, Ser-277, and Ser-316 each carry phosphoserine. The segment at 335–362 (AQGLRPRTVSSPIPYTPSPSSSRPISPG) is disordered. Position 342 is a phosphothreonine (Thr-342). Over residues 344–361 (SSPIPYTPSPSSSRPISP) the composition is skewed to low complexity. A phosphoserine mark is found at Ser-356 and Ser-360. Arg-380 carries the omega-N-methylarginine modification. Phosphoserine is present on residues Ser-388 and Ser-406. The interval 394–469 (QHMGASHGIT…QHPVHPSSQP (76 aa)) is disordered. The segment covering 419 to 444 (PTPPPSPNTQSPVQPPPPPPPPPMQP) has biased composition (pro residues). The SH3-binding motif lies at 435–444 (PPPPPPPMQP). Low complexity predominate over residues 460 to 469 (QHPVHPSSQP).

The protein resides in the cytoplasm. It localises to the cytoskeleton. The polypeptide is Coiled-coil domain-containing protein 6 (Ccdc6) (Mus musculus (Mouse)).